Reading from the N-terminus, the 453-residue chain is Flavonol-3-O-rhamnosyltransferase (453 aa).

The Proton acceptor role is filled by His24. Residue His24 coordinates an anthocyanidin. The active-site Charge relay is Asp119. His150 is a binding site for an anthocyanidin. Residues Thr280, Ala333, His350, Asn354, Ser355, and Glu358 each coordinate UDP-beta-L-rhamnose. Ala373 provides a ligand contact to an anthocyanidin.

It belongs to the UDP-glycosyltransferase family. In terms of tissue distribution, expressed in leaves, flowers, siliques, and stems. Expressed in the shoot apex.

The catalysed reaction is kaempferol + UDP-beta-L-rhamnose = kaempferol 3-O-alpha-L-rhamnoside + UDP + H(+). It carries out the reaction UDP-beta-L-rhamnose + quercetin = quercitrin + UDP + H(+). It participates in flavonoid metabolism. Its function is as follows. Flavonol 3-O-rhamnosyltransferase that catalyzes the transfer of rhamnose from UDP-rhamnose to the 3-OH position of kaempferol and quercetin. Possesses low quercetin 3-O-glucosyltransferase activity in vitro. The polypeptide is Flavonol-3-O-rhamnosyltransferase (Arabidopsis thaliana (Mouse-ear cress)).